A 169-amino-acid chain; its full sequence is uncharacterized protein (169 aa).

The chain crosses the membrane as a helical span at residues 97 to 117; the sequence is IVIFCILVIVAFVIWLVVWLF. The tract at residues 137-169 is disordered; it reads NYSGLPTPQPTPTHYPAEQYSYDPARDRDNYRY. A compositionally biased stretch (basic and acidic residues) spans 160-169; that stretch reads PARDRDNYRY.

The protein localises to the membrane. This is an uncharacterized protein from Caenorhabditis elegans.